Here is a 495-residue protein sequence, read N- to C-terminus: WD repeat-containing protein 37 (495 aa).

The segment at 1-34 (MPTESGSWAAARQTKQKRKSHSLSIKRTNSSEQD) is disordered. Residues 22–31 (SLSIKRTNSS) show a composition bias toward polar residues. 2 WD repeats span residues 154–194 (GHRD…CLIK) and 197–236 (GHAGSVNSIKFHPTEQIALTASGDQTAHIWRYMVQLPTPQ). The disordered stretch occupies residues 237 to 268 (PMADTSQISGEEEVDFSDKDENDGDGDASSDC). The segment covering 246–264 (GEEEVDFSDKDENDGDGDA) has biased composition (acidic residues). WD repeat units lie at residues 280–319 (SHQGVVIAADWLVGGKQAVTASWDRTANLYDVETSELVHS), 322–361 (GHDQELTHCCTHPTQRLVVTSSRDTTFRLWDFRDPSIHSV), 366–404 (GHTDTVTSAVFTVGDNVVSGSDDRTVKVWDLKNMRSPIA), 407–446 (RTDSAVNRISVSVGQRIIALPHDNRQVRLFDISGVRLARL), and 453–494 (GHRR…LLQE).

Its subcellular location is the cytoplasm. The protein localises to the nucleus. The polypeptide is WD repeat-containing protein 37 (wdr37) (Xenopus laevis (African clawed frog)).